The sequence spans 779 residues: Abnormal cell migration protein 10 (779 aa).

Acidic residues predominate over residues 78-97; the sequence is NELEADTEEDIAETADDEES. Disordered stretches follow at residues 78–105, 189–217, and 242–302; these read NELEADTEEDIAETADDEESKDPVEKTE, SSSRENVKSISTLPPPPPALSYHQTPQQP, and AASS…NAEE. Over residues 189-200 the composition is skewed to polar residues; it reads SSSRENVKSIST. The segment covering 242–254 has biased composition (low complexity); the sequence is AASSCSSPDGDSA. Residues 256–293 show a composition bias toward polar residues; that stretch reads GDSSSTESSNNRCRNSAFSSNDSCRDSLNTPSPTQVSP. Residues 317 to 407 enclose the Ras-associating domain; the sequence is EAKVTKIFVK…NKLYFMRRPD (91 aa). Positions 456–566 constitute a PH domain; that stretch reads PPEMEGFLYL…WLVALRIAKN (111 aa). Polar residues-rich tracts occupy residues 645-660 and 688-698; these read SFSVNSCQQSHPSRTS and RASTSSPTIPQ. The segment at 645–763 is disordered; sequence SFSVNSCQQS…SPMAPAKNDL (119 aa). Residues 708–729 are compositionally biased toward pro residues; the sequence is PAPPPVASVMRMPPPVTPPKPC.

Belongs to the MRL family. In terms of assembly, may interact (via Ras-associating and PH domains) with ced-10 (GTP-bound form).

It is found in the perikaryon. In terms of biological role, required cell non-autonomously for proper development of the excretory canals and for the long-range anterior-posterior migrations of embryonic neurons CAN, ALM and HSN. Plays a role, probably downstream of ced-10/rac1, in orientating axonal growth of HSN and AVM neurons in response to guidance cues such as slt-1. May regulate growth cone polarization by promoting asymmetric F-actin assembly. May be involved in signal transduction during cell migration. This chain is Abnormal cell migration protein 10, found in Caenorhabditis elegans.